The chain runs to 445 residues: DDB1- and CUL4-associated factor 13 (445 aa).

7 WD repeats span residues 64 to 104 (GHRD…CSRT), 107 to 146 (AHDG…YGEK), 152 to 191 (TILG…PMRS), 194 to 234 (WGVD…PLKK), 236 to 276 (ILEM…SPVK), 280 to 319 (DHVS…SREV), and 323 to 362 (KRMQ…KLGV). Residues 353–441 (KANASEKLGV…IPSEKKKHVL (89 aa)) form a required for nucleolar location region. 2 stretches are compositionally biased toward basic residues: residues 413–426 (ARRK…KHSK) and 436–445 (KKKHVLAVVE). The tract at residues 413–445 (ARRKKDVNRRKHSKPGSVPIPSEKKKHVLAVVE) is disordered.

This sequence belongs to the WD repeat DCAF13/WDSOF1 family. In terms of assembly, part of the small subunit (SSU) processome, composed of more than 70 proteins and the RNA chaperone small nucleolar RNA (snoRNA) U3. Component of the DCX(DCAF13) E3 ubiquitin ligase complex, at least composed of CUL4 (CUL4A or CUL4B), DDB1, DCAF13 and RBX1.

Its subcellular location is the nucleus. It localises to the nucleolus. Its pathway is protein modification; protein ubiquitination. Its function is as follows. Part of the small subunit (SSU) processome, first precursor of the small eukaryotic ribosomal subunit. During the assembly of the SSU processome in the nucleolus, many ribosome biogenesis factors, an RNA chaperone and ribosomal proteins associate with the nascent pre-rRNA and work in concert to generate RNA folding, modifications, rearrangements and cleavage as well as targeted degradation of pre-ribosomal RNA by the RNA exosome. In terms of biological role, substrate-recognition component of a DCX (DDB1-CUL4-X-box) E3 ubiquitin-protein ligase complex. The protein is DDB1- and CUL4-associated factor 13 (dcaf13) of Xenopus laevis (African clawed frog).